Reading from the N-terminus, the 228-residue chain is Interferon-induced transmembrane protein 10 (228 aa).

Residues methionine 1 to tyrosine 154 are Extracellular-facing. Residues alanine 29–alanine 49 are disordered. A helical membrane pass occupies residues leucine 155–alanine 175. S-palmitoyl cysteine attachment occurs at residues cysteine 167 and cysteine 168. Topologically, residues tyrosine 176–arginine 200 are cytoplasmic. A helical transmembrane segment spans residues leucine 201–leucine 221. Over arginine 222–tyrosine 228 the chain is Extracellular.

Belongs to the CD225/Dispanin family.

It is found in the cell membrane. This Homo sapiens (Human) protein is Interferon-induced transmembrane protein 10 (IFITM10).